Here is a 79-residue protein sequence, read N- to C-terminus: Putative defensin-like protein 274 (79 aa).

The N-terminal stretch at 1-23 is a signal peptide; it reads MASSRFQLVALLVVFSLVISITA. 4 disulfides stabilise this stretch: cysteine 35/cysteine 76, cysteine 41/cysteine 64, cysteine 47/cysteine 74, and cysteine 51/cysteine 75.

It belongs to the DEFL family.

It localises to the secreted. The polypeptide is Putative defensin-like protein 274 (Arabidopsis thaliana (Mouse-ear cress)).